We begin with the raw amino-acid sequence, 299 residues long: Oxygen-dependent coproporphyrinogen-III oxidase (299 aa).

S92 lines the substrate pocket. 2 residues coordinate a divalent metal cation: H96 and H106. Catalysis depends on H106, which acts as the Proton donor. 108 to 110 (NVR) provides a ligand contact to substrate. 2 residues coordinate a divalent metal cation: H145 and H175. Residues 240 to 275 (YVEFNLVWDRGTLFGLQTGGRTESILMSMPPLVRWE) form an important for dimerization region. 258–260 (GGR) contacts substrate.

Belongs to the aerobic coproporphyrinogen-III oxidase family. Homodimer. The cofactor is a divalent metal cation.

The protein resides in the cytoplasm. The enzyme catalyses coproporphyrinogen III + O2 + 2 H(+) = protoporphyrinogen IX + 2 CO2 + 2 H2O. The protein operates within porphyrin-containing compound metabolism; protoporphyrin-IX biosynthesis; protoporphyrinogen-IX from coproporphyrinogen-III (O2 route): step 1/1. Its function is as follows. Involved in the heme biosynthesis. Catalyzes the aerobic oxidative decarboxylation of propionate groups of rings A and B of coproporphyrinogen-III to yield the vinyl groups in protoporphyrinogen-IX. The sequence is that of Oxygen-dependent coproporphyrinogen-III oxidase from Salmonella dublin (strain CT_02021853).